Reading from the N-terminus, the 542-residue chain is Retron Ec83 probable ATPase (542 aa).

An ATP-binding motif is present at residues 92-99 (GNNGCGKS).

Its function is as follows. Probable ATPase component of antiviral defense system retron Ec83, composed of a non-coding RNA (ncRNA), a reverse transcriptase (RT), this protein and a putative HNH endonuclease. Expression of retron Ec83 confers protection against bacteriophage T2, T4 and T6. At multiplicity of infection (MOI) of 0.02 cultures slow growth when infected with T4 but do not collapse, at MOI 2 cultures enter growth stasis. The polypeptide is Retron Ec83 probable ATPase (Escherichia coli).